Here is a 115-residue protein sequence, read N- to C-terminus: NADH-ubiquinone oxidoreductase chain 3 (115 aa).

The next 3 helical transmembrane spans lie at 3–23, 55–75, and 84–104; these read VMLA…IAFW, FFLV…LLPL, and LPTM…SLAY.

It belongs to the complex I subunit 3 family. Core subunit of respiratory chain NADH dehydrogenase (Complex I) which is composed of 45 different subunits. Interacts with TMEM186. Interacts with TMEM242.

It localises to the mitochondrion inner membrane. It catalyses the reaction a ubiquinone + NADH + 5 H(+)(in) = a ubiquinol + NAD(+) + 4 H(+)(out). Its function is as follows. Core subunit of the mitochondrial membrane respiratory chain NADH dehydrogenase (Complex I) which catalyzes electron transfer from NADH through the respiratory chain, using ubiquinone as an electron acceptor. Essential for the catalytic activity of complex I. The protein is NADH-ubiquinone oxidoreductase chain 3 of Felis catus (Cat).